We begin with the raw amino-acid sequence, 314 residues long: Olfactory receptor 8U9 (314 aa).

Residues Met1–Met25 are Extracellular-facing. N-linked (GlcNAc...) asparagine glycosylation is present at Asn5. The helical transmembrane segment at Pro26 to Ile46 threads the bilayer. At Leu47 to Arg54 the chain is on the cytoplasmic side. The chain crosses the membrane as a helical span at residues Leu55–Ser75. At Val76–Ala99 the chain is on the extracellular side. Residues Cys97 and Cys189 are joined by a disulfide bond. A helical membrane pass occupies residues Gln100–Tyr120. At Asp121–Met133 the chain is on the cytoplasmic side. The chain crosses the membrane as a helical span at residues Val134–Leu154. The Extracellular segment spans residues Val155–Gln196. Residues Leu197 to Ser217 form a helical membrane-spanning segment. The Cytoplasmic portion of the chain corresponds to Tyr218–Ala237. The chain crosses the membrane as a helical span at residues Phe238–Met258. Over Tyr259–Asp271 the chain is Extracellular. N-linked (GlcNAc...) asparagine glycosylation is present at Asn265. Residues Lys272–Leu292 traverse the membrane as a helical segment. Topologically, residues Arg293–Ser314 are cytoplasmic.

Belongs to the G-protein coupled receptor 1 family.

Its subcellular location is the cell membrane. In terms of biological role, potential odorant receptor. This Mus musculus (Mouse) protein is Olfactory receptor 8U9.